Reading from the N-terminus, the 426-residue chain is Delta-aminolevulinic acid dehydratase, chloroplastic (426 aa).

Residues 1–45 (MASTVSFSPANVQMLQGRSCHGHAAFGGCSAVPRTGPRMRSVAVR) constitute a chloroplast transit peptide. Residues 74 to 107 (GRFPAPPPLVRPKAPEGTPQIRPLDLTKRPRRNR) are disordered. Lys-293 serves as the catalytic Schiff-base intermediate with substrate. 2 residues coordinate 5-aminolevulinate: Arg-303 and Lys-315. Residue Glu-331 participates in Mg(2+) binding. Lys-346 serves as the catalytic Schiff-base intermediate with substrate. 2 residues coordinate 5-aminolevulinate: Ser-372 and Tyr-411.

This sequence belongs to the ALAD family. In terms of assembly, homooctamer. Mg(2+) serves as cofactor.

Its subcellular location is the plastid. The protein resides in the chloroplast. The enzyme catalyses 2 5-aminolevulinate = porphobilinogen + 2 H2O + H(+). The protein operates within porphyrin-containing compound metabolism; protoporphyrin-IX biosynthesis; coproporphyrinogen-III from 5-aminolevulinate: step 1/4. Its function is as follows. Catalyzes an early step in the biosynthesis of tetrapyrroles. Binds two molecules of 5-aminolevulinate per subunit, each at a distinct site, and catalyzes their condensation to form porphobilinogen. This chain is Delta-aminolevulinic acid dehydratase, chloroplastic (HEMB), found in Oryza sativa subsp. japonica (Rice).